A 500-amino-acid chain; its full sequence is Glycerol kinase (500 aa).

Residue T14 participates in ADP binding. ATP is bound by residues T14, T15, and S16. T14 contacts sn-glycerol 3-phosphate. ADP is bound at residue R18. The sn-glycerol 3-phosphate site is built by R84, E85, and Y136. Glycerol contacts are provided by R84, E85, and Y136. H232 bears the Phosphohistidine; by HPr mark. Residue D246 coordinates sn-glycerol 3-phosphate. The glycerol site is built by D246 and Q247. Residues T268 and G311 each contribute to the ADP site. The ATP site is built by T268, G311, Q315, and G412. ADP contacts are provided by G412 and N416.

It belongs to the FGGY kinase family. As to quaternary structure, homotetramer and homodimer (in equilibrium). Post-translationally, the phosphoenolpyruvate-dependent sugar phosphotransferase system (PTS), including enzyme I, and histidine-containing protein (HPr) are required for the phosphorylation, which leads to the activation of the enzyme.

The catalysed reaction is glycerol + ATP = sn-glycerol 3-phosphate + ADP + H(+). It participates in polyol metabolism; glycerol degradation via glycerol kinase pathway; sn-glycerol 3-phosphate from glycerol: step 1/1. With respect to regulation, activated by phosphorylation and inhibited by fructose 1,6-bisphosphate (FBP). Key enzyme in the regulation of glycerol uptake and metabolism. Catalyzes the phosphorylation of glycerol to yield sn-glycerol 3-phosphate. The sequence is that of Glycerol kinase from Streptococcus uberis (strain ATCC BAA-854 / 0140J).